Consider the following 31-residue polypeptide: Cytochrome b6-f complex subunit 6 (31 aa).

Residues 3-23 (TITSYFGFLLAALTITPALFI) traverse the membrane as a helical segment.

The protein belongs to the PetL family. As to quaternary structure, the 4 large subunits of the cytochrome b6-f complex are cytochrome b6, subunit IV (17 kDa polypeptide, PetD), cytochrome f and the Rieske protein, while the 4 small subunits are PetG, PetL, PetM and PetN. The complex functions as a dimer.

It localises to the plastid. The protein resides in the chloroplast thylakoid membrane. In terms of biological role, component of the cytochrome b6-f complex, which mediates electron transfer between photosystem II (PSII) and photosystem I (PSI), cyclic electron flow around PSI, and state transitions. PetL is important for photoautotrophic growth as well as for electron transfer efficiency and stability of the cytochrome b6-f complex. This Zea mays (Maize) protein is Cytochrome b6-f complex subunit 6.